Here is a 494-residue protein sequence, read N- to C-terminus: Peptidyl-prolyl cis-trans isomerase-like 4 (494 aa).

Residues 1 to 172 (MSVLLETSAG…VDIRIKHTVI (172 aa)) form the PPIase cyclophilin-type domain. The tract at residues 176–196 (PYPDPAGMREPSASPPPSKAQ) is disordered. Residues 206–240 (EELLDVEASEEAAAEAERRRREREAAAQALTLEMM) are a coiled coil. The RRM domain occupies 253–331 (NVLFVCKLNP…RRIHVDFSQS (79 aa)). Basic and acidic residues-rich tracts occupy residues 391-418 (DLKG…DRST) and 425-494 (PRRD…YRRR). The segment at 391–494 (DLKGRHDGDK…NRGRDDYRRR (104 aa)) is disordered.

Belongs to the cyclophilin-type PPIase family. PPIL4 subfamily.

It localises to the nucleus. It carries out the reaction [protein]-peptidylproline (omega=180) = [protein]-peptidylproline (omega=0). Functionally, PPIases accelerate the folding of proteins. It catalyzes the cis-trans isomerization of proline imidic peptide bonds in oligopeptides. The sequence is that of Peptidyl-prolyl cis-trans isomerase-like 4 (cyp-6) from Neurospora crassa (strain ATCC 24698 / 74-OR23-1A / CBS 708.71 / DSM 1257 / FGSC 987).